A 284-amino-acid polypeptide reads, in one-letter code: Tropomyosin (284 aa).

M1 bears the N-acetylmethionine mark. Disordered stretches follow at residues 1-49 and 103-126; these read MDAI…NQKK and EERLNTATTKLAEASQAADESERM. Residues 1-284 adopt a coiled-coil conformation; sequence MDAIKKKMQA…DQAFSELSGF (284 aa). A compositionally biased stretch (basic and acidic residues) spans 12 to 45; it reads KLEKDNAMDKADTLEQQNKEANLRAEKTEEEIRA.

Belongs to the tropomyosin family. As to quaternary structure, homodimer. As to expression, expressed in leg muscle and chest protection muscle (at protein level).

Its function is as follows. Tropomyosin, in association with the troponin complex, plays a central role in the calcium dependent regulation of muscle contraction. This is Tropomyosin from Chionoecetes opilio (Atlantic snow crab).